The sequence spans 444 residues: tRNA modification GTPase MnmE (444 aa).

(6S)-5-formyl-5,6,7,8-tetrahydrofolate is bound by residues Arg-28, Glu-86, and Arg-126. One can recognise a TrmE-type G domain in the interval 224-368 (GFCVVLAGAP…LLDAIQGSAA (145 aa)). Position 234 (Asn-234) interacts with K(+). GTP is bound by residues 234 to 239 (NAGKST), 253 to 259 (SDIPGTT), and 278 to 281 (DTAG). Ser-238 contributes to the Mg(2+) binding site. Positions 253, 255, and 258 each coordinate K(+). Thr-259 provides a ligand contact to Mg(2+). (6S)-5-formyl-5,6,7,8-tetrahydrofolate is bound at residue Lys-444.

This sequence belongs to the TRAFAC class TrmE-Era-EngA-EngB-Septin-like GTPase superfamily. TrmE GTPase family. As to quaternary structure, homodimer. Heterotetramer of two MnmE and two MnmG subunits. K(+) serves as cofactor.

It localises to the cytoplasm. Functionally, exhibits a very high intrinsic GTPase hydrolysis rate. Involved in the addition of a carboxymethylaminomethyl (cmnm) group at the wobble position (U34) of certain tRNAs, forming tRNA-cmnm(5)s(2)U34. The polypeptide is tRNA modification GTPase MnmE (Methylorubrum populi (strain ATCC BAA-705 / NCIMB 13946 / BJ001) (Methylobacterium populi)).